A 352-amino-acid chain; its full sequence is Type II restriction enzyme HaeII (352 aa).

The enzyme catalyses Endonucleolytic cleavage of DNA to give specific double-stranded fragments with terminal 5'-phosphates.. A P subtype restriction enzyme that recognizes the double-stranded sequence 5'-RGCGCY-3' and cleaves after C-5. The polypeptide is Type II restriction enzyme HaeII (haeIIR) (Haemophilus aegyptius).